The following is a 447-amino-acid chain: DNA primase DnaG (447 aa).

Residues 200–274 (DSIIVVEGRA…DIDYVARAPE (75 aa)) form the Toprim domain. Glu206, Asp248, and Asp250 together coordinate Mg(2+). The disordered stretch occupies residues 316 to 339 (ERRRGGARKQEYTKKGSLNPQPQV).

It belongs to the archaeal DnaG primase family. As to quaternary structure, forms a ternary complex with MCM helicase and DNA. Component of the archaeal exosome complex. It depends on Mg(2+) as a cofactor.

It carries out the reaction ssDNA + n NTP = ssDNA/pppN(pN)n-1 hybrid + (n-1) diphosphate.. Its function is as follows. RNA polymerase that catalyzes the synthesis of short RNA molecules used as primers for DNA polymerase during DNA replication. Also part of the exosome, which is a complex involved in RNA degradation. Acts as a poly(A)-binding protein that enhances the interaction between heteromeric, adenine-rich transcripts and the exosome. The chain is DNA primase DnaG from Pyrococcus furiosus (strain ATCC 43587 / DSM 3638 / JCM 8422 / Vc1).